A 242-amino-acid polypeptide reads, in one-letter code: Ras-like protein family member 11A (242 aa).

The tract at residues 17–241 (ESSSDYLLPK…SSKAKAASTL (225 aa)) is small GTPase-like. Residues 34-41 (GASCVGKS), 81-85 (DTPGG), and 147-150 (NKGD) each bind GTP.

This sequence belongs to the small GTPase superfamily. Ras family. As to quaternary structure, interacts with UBF/UBTF.

It localises to the nucleus. Its subcellular location is the nucleolus. It catalyses the reaction GTP + H2O = GDP + phosphate + H(+). Regulator of rDNA transcription. Acts in cooperation UBF/UBTF and positively regulates RNA polymerase I transcription. This is Ras-like protein family member 11A from Rattus norvegicus (Rat).